A 166-amino-acid chain; its full sequence is MQRVPMTKGGLVRLKDELRRLKSVERPKIVKEIAEARAHGDLSENAEYHAAKEKQSHIEGRIAQVEHWIASAEVIDVTKHAGDRVVFGATVSLEDAESGDQVTYRIVGELEADLKQGKISVTSPIARALIGRSEGDTVVVRSPGGEKEYEIQSVAFVEEELPTESE.

It belongs to the GreA/GreB family.

Its function is as follows. Necessary for efficient RNA polymerase transcription elongation past template-encoded arresting sites. The arresting sites in DNA have the property of trapping a certain fraction of elongating RNA polymerases that pass through, resulting in locked ternary complexes. Cleavage of the nascent transcript by cleavage factors such as GreA or GreB allows the resumption of elongation from the new 3'terminus. GreA releases sequences of 2 to 3 nucleotides. This is Transcription elongation factor GreA from Anaeromyxobacter sp. (strain K).